Here is a 545-residue protein sequence, read N- to C-terminus: DnaJ homolog subfamily C member 21 (545 aa).

Positions 3 to 69 (CHYEVLGVKR…QERAWYDNHR (67 aa)) constitute a J domain. 4 disordered regions span residues 122–141 (EKEHSKDEEDEEDEFPSFGE), 276–302 (EYGQEFGDASDSEENEEELESRDIANV), 331–497 (SFKS…KEVN), and 522–545 (HATALSSSNTSQTSKKKKDSRKNR). Acidic residues-rich tracts occupy residues 129 to 141 (EEDEEDEFPSFGE) and 283 to 295 (DASDSEENEEELE). Residues 180–286 (RWEKRAMEKE…YGQEFGDASD (107 aa)) adopt a coiled-coil conformation. The C2H2-type 1 zinc finger occupies 323 to 347 (LYCPACDKSFKSDKAMKNHSKSKKH). Positions 339–348 (KNHSKSKKHR) are enriched in basic residues. Over residues 372–388 (REEDDEEEDDDDDDEQN) the composition is skewed to acidic residues. Basic residues predominate over residues 394–406 (KLSKRQKKKKRLQ). The C2H2-type 2 zinc finger occupies 498–522 (LRCVTCQYEFTTRNKLFDHLKSTGH). The segment covering 535–545 (SKKKKDSRKNR) has biased composition (basic residues).

May act as a co-chaperone for HSP70. The polypeptide is DnaJ homolog subfamily C member 21 (dnajc21) (Danio rerio (Zebrafish)).